The sequence spans 191 residues: Early nodulin-like protein 8 (191 aa).

The signal sequence occupies residues 1–22 (MGVMSLSKTMVVVVLQVMILLG). The Phytocyanin domain maps to 31–133 (TLYKVGDLDA…YQKLLVSVGT (103 aa)). The cysteines at positions 87 and 121 are disulfide-linked. Residues asparagine 104 and asparagine 108 are each glycosylated (N-linked (GlcNAc...) asparagine). Serine 165 carries GPI-anchor amidated serine lipidation. Positions 166 to 191 (SASSSLISAFSTVAASLACAVVGAIM) are cleaved as a propeptide — removed in mature form.

Belongs to the early nodulin-like (ENODL) family. Mostly expressed in seedlings and roots, and, to a lower extent, in leaves, flowers, stems and seeds.

It is found in the cell membrane. In terms of biological role, may act as a carbohydrate transporter. The protein is Early nodulin-like protein 8 of Arabidopsis thaliana (Mouse-ear cress).